Consider the following 892-residue polypeptide: Polyribonucleotide nucleotidyltransferase (892 aa).

Residues 407-427 (YMHNYEMPPYSTGETGRVGSP) are disordered. 2 residues coordinate Mg(2+): D521 and D527. Residues 587–646 (PRIITTTVPVDKIGEVIGPKGKMINQIQEDTGAEIAIEDDGTVYISSEGGEAAEKAKEII) enclose the KH domain. The 73-residue stretch at 658–730 (GETYNGKVVK…DRGKISLAIP (73 aa)) folds into the S1 motif domain. Residues 727-892 (LAIPGFEDQE…VRRDFDPFED (166 aa)) are disordered. Composition is skewed to basic and acidic residues over residues 739–844 (APRR…DRRS) and 851–877 (RRDD…ERSE).

It belongs to the polyribonucleotide nucleotidyltransferase family. Mg(2+) is required as a cofactor.

Its subcellular location is the cytoplasm. The enzyme catalyses RNA(n+1) + phosphate = RNA(n) + a ribonucleoside 5'-diphosphate. Its function is as follows. Involved in mRNA degradation. Catalyzes the phosphorolysis of single-stranded polyribonucleotides processively in the 3'- to 5'-direction. The sequence is that of Polyribonucleotide nucleotidyltransferase from Bifidobacterium adolescentis (strain ATCC 15703 / DSM 20083 / NCTC 11814 / E194a).